Reading from the N-terminus, the 152-residue chain is Ribosome maturation factor RimP (152 aa).

The protein belongs to the RimP family.

The protein resides in the cytoplasm. Its function is as follows. Required for maturation of 30S ribosomal subunits. The sequence is that of Ribosome maturation factor RimP from Aeromonas salmonicida (strain A449).